Reading from the N-terminus, the 359-residue chain is Guanine nucleotide-binding protein G(q) subunit alpha (359 aa).

S-palmitoyl cysteine attachment occurs at residues Cys9 and Cys10. The G-alpha domain occupies 38–359 (RELKLLLLGT…QLNLKEYNLV (322 aa)). Residues 41 to 54 (KLLLLGTGESGKST) are G1 motif. GTP is bound by residues Ser50, Gly51, Lys52, Ser53, Thr54, Ser156, Leu180, Arg181, and Arg183. Ser53 is a Mg(2+) binding site. The tract at residues 178–186 (DVLRVRVPT) is G2 motif. A Mg(2+)-binding site is contributed by Thr186. The G3 motif stretch occupies residues 201 to 210 (FRMVDVGGQR). 5-glutamyl histamine is present on Gln209. Residues 270-277 (ILFLNKKD) are G4 motif. GTP contacts are provided by Asn274, Lys275, Asp277, and Ala331. The segment at 329-334 (TCATDT) is G5 motif.

Belongs to the G-alpha family. G(q) subfamily. G proteins are composed of 3 units; alpha, beta and gamma. The alpha chain contains the guanine nucleotide binding site. Interacts (GDP-bound form) with RIC8A (via C-terminus); promoting GNAQ folding and association with the plasma membrane. Binds NHERF1. Forms a complex with PECAM1 and BDKRB2. Interacts with GAS2L2. Palmitoylated by ZDHHC3 and ZDHHC7. Palmitoylation occurs in the Golgi and participates in the localization of GNAQ to the plasma membrane. Post-translationally, histaminylated at Gln-209 residues by TGM2.

The protein resides in the cell membrane. It localises to the golgi apparatus. It is found in the nucleus. Its subcellular location is the nucleus membrane. The catalysed reaction is GTP + H2O = GDP + phosphate + H(+). Functionally, guanine nucleotide-binding proteins (G proteins) function as transducers downstream of G protein-coupled receptors (GPCRs) in numerous signaling cascades. The alpha chain contains the guanine nucleotide binding site and alternates between an active, GTP-bound state and an inactive, GDP-bound state. Signaling by an activated GPCR promotes GDP release and GTP binding. The alpha subunit has a low GTPase activity that converts bound GTP to GDP, thereby terminating the signal. Both GDP release and GTP hydrolysis are modulated by numerous regulatory proteins. Signaling is mediated via phospholipase C-beta-dependent inositol lipid hydrolysis for signal propagation: activates phospholipase C-beta: following GPCR activation, GNAQ activates PLC-beta (PLCB1, PLCB2, PLCB3 or PLCB4), leading to production of diacylglycerol (DAG) and inositol 1,4,5-trisphosphate (IP3). Required for platelet activation. Regulates B-cell selection and survival and is required to prevent B-cell-dependent autoimmunity. Regulates chemotaxis of BM-derived neutrophils and dendritic cells (in vitro). Transduces FFAR4 signaling in response to long-chain fatty acids (LCFAs). Together with GNA11, required for heart development. This chain is Guanine nucleotide-binding protein G(q) subunit alpha (Gnaq), found in Rattus norvegicus (Rat).